A 173-amino-acid polypeptide reads, in one-letter code: Crossover junction endodeoxyribonuclease RuvC (173 aa).

Catalysis depends on residues D8, E67, and D139. Positions 8, 67, and 139 each coordinate Mg(2+).

The protein belongs to the RuvC family. As to quaternary structure, homodimer which binds Holliday junction (HJ) DNA. The HJ becomes 2-fold symmetrical on binding to RuvC with unstacked arms; it has a different conformation from HJ DNA in complex with RuvA. In the full resolvosome a probable DNA-RuvA(4)-RuvB(12)-RuvC(2) complex forms which resolves the HJ. Requires Mg(2+) as cofactor.

It is found in the cytoplasm. It carries out the reaction Endonucleolytic cleavage at a junction such as a reciprocal single-stranded crossover between two homologous DNA duplexes (Holliday junction).. The RuvA-RuvB-RuvC complex processes Holliday junction (HJ) DNA during genetic recombination and DNA repair. Endonuclease that resolves HJ intermediates. Cleaves cruciform DNA by making single-stranded nicks across the HJ at symmetrical positions within the homologous arms, yielding a 5'-phosphate and a 3'-hydroxyl group; requires a central core of homology in the junction. The consensus cleavage sequence is 5'-(A/T)TT(C/G)-3'. Cleavage occurs on the 3'-side of the TT dinucleotide at the point of strand exchange. HJ branch migration catalyzed by RuvA-RuvB allows RuvC to scan DNA until it finds its consensus sequence, where it cleaves and resolves the cruciform DNA. This chain is Crossover junction endodeoxyribonuclease RuvC, found in Aliivibrio salmonicida (strain LFI1238) (Vibrio salmonicida (strain LFI1238)).